A 394-amino-acid chain; its full sequence is Cystathionine gamma-lyase (394 aa).

The segment at 37 to 56 is disordered; it reads KQSSPANPIGTYEYSRSQNP. 3 residues coordinate substrate: Arg52, Tyr104, and Arg109. Position 204 is an N6-(pyridoxal phosphate)lysine (Lys204). Glu334 contributes to the substrate binding site. A Phosphoserine modification is found at Ser362.

Belongs to the trans-sulfuration enzymes family. In terms of assembly, homotetramer. Pyridoxal 5'-phosphate serves as cofactor.

Its subcellular location is the cytoplasm. It carries out the reaction L,L-cystathionine + H2O = 2-oxobutanoate + L-cysteine + NH4(+). Its pathway is amino-acid biosynthesis; L-cysteine biosynthesis; L-cysteine from L-homocysteine and L-serine: step 2/2. Catalyzes the production of cysteine from cystathionine in the reverse transsulfuration pathway for the biosynthesis of sulfur-containing amino acids cysteine and methionine. In this pathway, homocysteine sulfur is converted to cysteine sulfur. Also has cystathionine beta-lyase and cystathionine gamma-synthase activities in vitro. Cystathionine beta-lyase may be physiological, while cystathionine gamma-synthase activity is not, as the required substrate O-succinyl-L-homoserine(OSH) does not occur naturally in S.cerevisiae. This chain is Cystathionine gamma-lyase, found in Saccharomyces cerevisiae (strain ATCC 204508 / S288c) (Baker's yeast).